The primary structure comprises 163 residues: Lipoprotein signal peptidase (163 aa).

The next 3 membrane-spanning stretches (helical) occupy residues 11 to 31 (ILIA…IATT), 64 to 84 (MTFF…FFIN), and 88 to 108 (YNLF…GNFI). Catalysis depends on residues Asp118 and Asp136. The chain crosses the membrane as a helical span at residues 131–151 (IFNIADSSLTIGVILIIIALL).

Belongs to the peptidase A8 family.

The protein resides in the cell membrane. It catalyses the reaction Release of signal peptides from bacterial membrane prolipoproteins. Hydrolyzes -Xaa-Yaa-Zaa-|-(S,diacylglyceryl)Cys-, in which Xaa is hydrophobic (preferably Leu), and Yaa (Ala or Ser) and Zaa (Gly or Ala) have small, neutral side chains.. Its pathway is protein modification; lipoprotein biosynthesis (signal peptide cleavage). This protein specifically catalyzes the removal of signal peptides from prolipoproteins. The chain is Lipoprotein signal peptidase from Staphylococcus aureus (strain bovine RF122 / ET3-1).